A 673-amino-acid polypeptide reads, in one-letter code: Annexin A6 (673 aa).

Ala2 carries the N-acetylalanine modification. Ser13 is subject to Phosphoserine. Annexin repeat units lie at residues 20–91, 92–163, 175–247, 251–322, 363–434, 435–506, 521–595, and 599–670; these read FDPN…GLMR, PPAY…VLLQ, DLVQ…AVVK, STPE…KLSG, FNPD…GLMM, PPAH…SLAT, EDAQ…AIVQ, and NKPL…ALCG. Phosphotyrosine is present on Tyr30. N6-acetyllysine is present on residues Lys63, Lys68, Lys75, and Lys81. Tyr201 is modified (phosphotyrosine). Lys306, Lys370, and Lys418 each carry N6-acetyllysine. Ser422 carries the post-translational modification Phosphoserine. N6-acetyllysine is present on Lys483. Ser537 carries the post-translational modification Phosphoserine. Lys620 carries the post-translational modification N6-acetyllysine.

This sequence belongs to the annexin family. In terms of processing, phosphorylated in response to growth factor stimulation.

Its subcellular location is the cytoplasm. It localises to the melanosome. May associate with CD21. May regulate the release of Ca(2+) from intracellular stores. The polypeptide is Annexin A6 (ANXA6) (Homo sapiens (Human)).